The sequence spans 461 residues: Photosystem II CP43 reaction center protein (461 aa).

Positions 1–2 (ME) are excised as a propeptide. Thr3 bears the N-acetylthreonine mark. Phosphothreonine is present on Thr3. Transmembrane regions (helical) follow at residues 57-81 (LFEVAHFVPEKPMYEQGLILLPHLA), 122-143 (LLGPETLEESFPFFGYVWKDRN), 166-188 (KALYFGGVYDTWAPGGGDVRKIT), 243-263 (KPFAWARRALVWSGEAYLSYS), and 279-300 (WFNNTAYPSEFYGPTGPEASQA). [CaMn4O5] cluster is bound at residue Glu355. The helical transmembrane segment at 435–459 (RARAAAAGFEKGIDRDFEPVLSMTP) threads the bilayer.

It belongs to the PsbB/PsbC family. PsbC subfamily. PSII is composed of 1 copy each of membrane proteins PsbA, PsbB, PsbC, PsbD, PsbE, PsbF, PsbH, PsbI, PsbJ, PsbK, PsbL, PsbM, PsbT, PsbX, PsbY, PsbZ, Psb30/Ycf12, at least 3 peripheral proteins of the oxygen-evolving complex and a large number of cofactors. It forms dimeric complexes. Binds multiple chlorophylls and provides some of the ligands for the Ca-4Mn-5O cluster of the oxygen-evolving complex. It may also provide a ligand for a Cl- that is required for oxygen evolution. PSII binds additional chlorophylls, carotenoids and specific lipids. is required as a cofactor.

It localises to the plastid. Its subcellular location is the chloroplast thylakoid membrane. Its function is as follows. One of the components of the core complex of photosystem II (PSII). It binds chlorophyll and helps catalyze the primary light-induced photochemical processes of PSII. PSII is a light-driven water:plastoquinone oxidoreductase, using light energy to abstract electrons from H(2)O, generating O(2) and a proton gradient subsequently used for ATP formation. This Platanus occidentalis (Sycamore) protein is Photosystem II CP43 reaction center protein.